The following is a 434-amino-acid chain: Histidine--tRNA ligase (434 aa).

The protein belongs to the class-II aminoacyl-tRNA synthetase family. As to quaternary structure, homodimer.

Its subcellular location is the cytoplasm. The enzyme catalyses tRNA(His) + L-histidine + ATP = L-histidyl-tRNA(His) + AMP + diphosphate + H(+). This is Histidine--tRNA ligase from Latilactobacillus sakei subsp. sakei (strain 23K) (Lactobacillus sakei subsp. sakei).